A 368-amino-acid chain; its full sequence is Alanine racemase (368 aa).

Catalysis depends on Lys40, which acts as the Proton acceptor; specific for D-alanine. Lys40 carries the N6-(pyridoxal phosphate)lysine modification. Arg134 provides a ligand contact to substrate. The active-site Proton acceptor; specific for L-alanine is the Tyr263. Position 310 (Met310) interacts with substrate.

It belongs to the alanine racemase family. Pyridoxal 5'-phosphate is required as a cofactor.

The enzyme catalyses L-alanine = D-alanine. It functions in the pathway amino-acid biosynthesis; D-alanine biosynthesis; D-alanine from L-alanine: step 1/1. Functionally, catalyzes the interconversion of L-alanine and D-alanine. May also act on other amino acids. The sequence is that of Alanine racemase (alr) from Listeria monocytogenes serovar 1/2a (strain ATCC BAA-679 / EGD-e).